The primary structure comprises 393 residues: Cytochrome b (393 aa).

Transmembrane regions (helical) follow at residues 32-52, 76-98, 113-133, and 179-199; these read FGSLLAFCLVIQIITGVTLAM, WLIRYLHANTASAFFFIVYLHMG, VWTLGVIIFILMIVTAFLGYV, and FFALHFVLPFVLAALALMHLI. His82 and His96 together coordinate heme b. Heme b is bound by residues His183 and His197. His202 is an a ubiquinone binding site. Transmembrane regions (helical) follow at residues 226-246, 290-310, 322-342, and 349-369; these read FIFKDLITIFLFILGLSIFVF, LLGVIAMFAAIVILLVMPFTD, LSKIAYYFFIANFLILMKLGA, and FIEFGQISTVLYFSHFVIIVP.

It belongs to the cytochrome b family. In terms of assembly, fungal cytochrome b-c1 complex contains 10 subunits; 3 respiratory subunits, 2 core proteins and 5 low-molecular weight proteins. Cytochrome b-c1 complex is a homodimer. It depends on heme b as a cofactor.

The protein resides in the mitochondrion inner membrane. Its function is as follows. Component of the ubiquinol-cytochrome c reductase complex (complex III or cytochrome b-c1 complex) that is part of the mitochondrial respiratory chain. The b-c1 complex mediates electron transfer from ubiquinol to cytochrome c. Contributes to the generation of a proton gradient across the mitochondrial membrane that is then used for ATP synthesis. The protein is Cytochrome b (COB) of Venturia inaequalis (Apple scab fungus).